The primary structure comprises 182 residues: Triplatin (182 aa).

Residues 1 to 18 form the signal peptide; the sequence is MKMIIAVTFLGIVTIAFA. Cystine bridges form between C21-C133, C55-C177, and C88-C105.

It belongs to the calycin superfamily. Triabin family. In terms of tissue distribution, expressed in salivary glands.

The protein resides in the secreted. Its function is as follows. Inhibits platelet aggregation and vasoconstriction through binding to distinct eicosanoids involved in inflammation (acts as a scavenger), and has a role in inhibiting host innate immunity by impairing platelet-assisted formation of neutrophil extracellular traps (NETs). Inhibits platelet aggregation by collagen, and low doses of thromboxane A2 mimetic (TXA2 mimetic), and arachidonic acid (AA) without affecting aggregation induced by ADP, convulxin (GP6 agonist), and PMA. Binds to TXA2, TXB2, prostaglandine H2 mimetic (PGH2 mimetic), PGJ2, and PGF2alpha. Binding is not observed to leukotrienes, AA, and biogenic amines (PGE1, 5(S)-HETE, 12(S)-HETE, 20-HETE, norepinephrine, epinephrine, serotonin, LTC4 and ADP). Induces relaxation of aorta rat previously contracted with TXA2 mimetic. Moreover, it also impairs platelet-assisted formation of neutrophil extracellular traps (NETs). NETs are web-like structures of DNA and proteins that play an important role in killing of pathogens. In addition, NETs are implicated in thrombus formation. In vivo, this protein exhibits antithrombotic activity in two distinct mice models that are highly dependent on platelets. It is noteworthy that it inhibits thrombosis without promoting excessive bleeding. The polypeptide is Triplatin (Triatoma infestans (Assassin bug)).